The sequence spans 156 residues: Ribosomal RNA large subunit methyltransferase H (156 aa).

S-adenosyl-L-methionine-binding positions include leucine 73, glycine 104, and 123–128 (LSSLTL).

Belongs to the RNA methyltransferase RlmH family. Homodimer.

It is found in the cytoplasm. It catalyses the reaction pseudouridine(1915) in 23S rRNA + S-adenosyl-L-methionine = N(3)-methylpseudouridine(1915) in 23S rRNA + S-adenosyl-L-homocysteine + H(+). Functionally, specifically methylates the pseudouridine at position 1915 (m3Psi1915) in 23S rRNA. The chain is Ribosomal RNA large subunit methyltransferase H from Neisseria meningitidis serogroup C / serotype 2a (strain ATCC 700532 / DSM 15464 / FAM18).